The primary structure comprises 156 residues: 6,7-dimethyl-8-ribityllumazine synthase (156 aa).

Residues tryptophan 28, 60-62, and 82-84 each bind 5-amino-6-(D-ribitylamino)uracil; these read SFE and VVV. A (2S)-2-hydroxy-3-oxobutyl phosphate-binding site is contributed by 87 to 88; sequence GT. Histidine 90 (proton donor) is an active-site residue. Residue phenylalanine 115 coordinates 5-amino-6-(D-ribitylamino)uracil. Arginine 129 lines the (2S)-2-hydroxy-3-oxobutyl phosphate pocket.

Belongs to the DMRL synthase family.

It catalyses the reaction (2S)-2-hydroxy-3-oxobutyl phosphate + 5-amino-6-(D-ribitylamino)uracil = 6,7-dimethyl-8-(1-D-ribityl)lumazine + phosphate + 2 H2O + H(+). Its pathway is cofactor biosynthesis; riboflavin biosynthesis; riboflavin from 2-hydroxy-3-oxobutyl phosphate and 5-amino-6-(D-ribitylamino)uracil: step 1/2. In terms of biological role, catalyzes the formation of 6,7-dimethyl-8-ribityllumazine by condensation of 5-amino-6-(D-ribitylamino)uracil with 3,4-dihydroxy-2-butanone 4-phosphate. This is the penultimate step in the biosynthesis of riboflavin. The chain is 6,7-dimethyl-8-ribityllumazine synthase from Kocuria rhizophila (strain ATCC 9341 / DSM 348 / NBRC 103217 / DC2201).